Here is a 248-residue protein sequence, read N- to C-terminus: Large ribosomal subunit protein uL10m (248 aa).

The transit peptide at 1–24 directs the protein to the mitochondrion; it reads MATLIQRSLSLAKSSTPALQFLRF.

This sequence belongs to the universal ribosomal protein uL10 family. As to quaternary structure, component of the mitochondrial ribosome large subunit (39S) which comprises a 16S rRNA and about 50 distinct proteins.

It localises to the mitochondrion. The protein is Large ribosomal subunit protein uL10m (mRpL10) of Drosophila melanogaster (Fruit fly).